We begin with the raw amino-acid sequence, 693 residues long: Elongation factor G (693 aa).

One can recognise a tr-type G domain in the interval 8–282 (EKTRNIGIMA…AVIDYLPSPL (275 aa)). GTP is bound by residues 17-24 (AHVDAGKT), 81-85 (DTPGH), and 135-138 (NKMD).

This sequence belongs to the TRAFAC class translation factor GTPase superfamily. Classic translation factor GTPase family. EF-G/EF-2 subfamily.

Its subcellular location is the cytoplasm. In terms of biological role, catalyzes the GTP-dependent ribosomal translocation step during translation elongation. During this step, the ribosome changes from the pre-translocational (PRE) to the post-translocational (POST) state as the newly formed A-site-bound peptidyl-tRNA and P-site-bound deacylated tRNA move to the P and E sites, respectively. Catalyzes the coordinated movement of the two tRNA molecules, the mRNA and conformational changes in the ribosome. This is Elongation factor G from Streptococcus suis (strain 05ZYH33).